Consider the following 64-residue polypeptide: Alpha-conotoxin GI (64 aa).

A signal peptide spans Met-1 to Ser-21. Positions Phe-22 to Lys-49 are excised as a propeptide. 2 disulfides stabilise this stretch: Cys-51-Cys-56 and Cys-52-Cys-62. Cys-62 carries the cysteine amide modification.

This sequence belongs to the conotoxin A superfamily. Not hydroxylated; hydroxylation, on a synthetic hydroxylated GI, improves its folding but impairs its activity against target receptors. Expressed by the venom duct.

The protein resides in the secreted. Functionally, alpha-conotoxins act on postsynaptic membranes, they bind to the nicotinic acetylcholine receptors (nAChR) and thus inhibit them. Reversibly inhibits mammalian muscle nAChR (IC(50)=339 nM on adult subtype (alpha-1-beta-1-gamma-delta/CHRNA1-CHRNB1-CHRNG-CHRND) and IC(50)=5.86-995 nM on fetal subtype (alpha-1-beta-1-delta-epsilon/CHRNA1-CHRNB1-CHRND-CHRNE)). The higher affinity site is the alpha/delta site on mouse muscle-derived BC3H-1 receptor, and the other site (alpha/gamma site) on nicotinic receptors from Torpedo californica electric organ. This is Alpha-conotoxin GI from Conus geographus (Geography cone).